Here is a 148-residue protein sequence, read N- to C-terminus: Nucleoside diphosphate kinase (148 aa).

ATP-binding residues include Lys10, Phe58, Arg86, Thr92, Arg103, and Asn113. The Pros-phosphohistidine intermediate role is filled by His116.

Belongs to the NDK family. It depends on Mg(2+) as a cofactor.

Its subcellular location is the cytoplasm. The catalysed reaction is a 2'-deoxyribonucleoside 5'-diphosphate + ATP = a 2'-deoxyribonucleoside 5'-triphosphate + ADP. The enzyme catalyses a ribonucleoside 5'-diphosphate + ATP = a ribonucleoside 5'-triphosphate + ADP. In terms of biological role, major role in the synthesis of nucleoside triphosphates other than ATP. The ATP gamma phosphate is transferred to the NDP beta phosphate via a ping-pong mechanism, using a phosphorylated active-site intermediate. This Thermoplasma acidophilum (strain ATCC 25905 / DSM 1728 / JCM 9062 / NBRC 15155 / AMRC-C165) protein is Nucleoside diphosphate kinase.